Here is a 112-residue protein sequence, read N- to C-terminus: Peptidyl-tRNA hydrolase (112 aa).

A disordered region spans residues 64–99 (EEAKRAGLPTGLISDAGRTQLEPGTPTALAIGPAPD).

It belongs to the PTH2 family.

The protein localises to the cytoplasm. It carries out the reaction an N-acyl-L-alpha-aminoacyl-tRNA + H2O = an N-acyl-L-amino acid + a tRNA + H(+). In terms of biological role, the natural substrate for this enzyme may be peptidyl-tRNAs which drop off the ribosome during protein synthesis. This Halobacterium salinarum (strain ATCC 29341 / DSM 671 / R1) protein is Peptidyl-tRNA hydrolase.